Reading from the N-terminus, the 532-residue chain is Aspartate--tRNA ligase 1, cytoplasmic (532 aa).

Positions 7–41 form a coiled coil; it reads LEECGEKISKKESKKRAAKLEKLLRKQEREEATSS. Residues 31-58 are disordered; it reads RKQEREEATSSSLSLEEEDESCSSNYGD. The OB DNA-binding region spans 88–169; sequence VSIRGRLHKN…QVEIHVRKMY (82 aa). L-aspartate is bound at residue E260. Positions 282-285 are aspartate; the sequence is QLHK. L-aspartate is bound at residue R304. Residues 304-306, 312-314, and E455 each bind ATP; these read RAE and RHL. The Mg(2+) site is built by E455 and S458. Positions 458 and 462 each coordinate L-aspartate. Position 503–506 (503–506) interacts with ATP; the sequence is GLER.

Belongs to the class-II aminoacyl-tRNA synthetase family. Type 2 subfamily.

It is found in the cytoplasm. The protein resides in the cytosol. It carries out the reaction tRNA(Asp) + L-aspartate + ATP = L-aspartyl-tRNA(Asp) + AMP + diphosphate. In terms of biological role, catalyzes the specific attachment of an amino acid to its cognate tRNA in a 2 step reaction: the amino acid (AA) is first activated by ATP to form AA-AMP and then transferred to the acceptor end of the tRNA. In Arabidopsis thaliana (Mouse-ear cress), this protein is Aspartate--tRNA ligase 1, cytoplasmic.